Consider the following 775-residue polypeptide: 5-methyltetrahydropteroyltriglutamate--homocysteine methyltransferase (775 aa).

Residues 15–18 (RELK) and lysine 118 each bind 5-methyltetrahydropteroyltri-L-glutamate. Residues 448–450 (IGS) and glutamate 501 each bind L-homocysteine. L-methionine contacts are provided by residues 448–450 (IGS) and glutamate 501. Residues 532–533 (RC) and tryptophan 578 each bind 5-methyltetrahydropteroyltri-L-glutamate. Aspartate 616 is a binding site for L-homocysteine. L-methionine is bound at residue aspartate 616. Glutamate 622 serves as a coordination point for 5-methyltetrahydropteroyltri-L-glutamate. Zn(2+) is bound by residues histidine 658, cysteine 660, and glutamate 682. Residue histidine 711 is the Proton donor of the active site. Zn(2+) is bound at residue cysteine 743.

It belongs to the vitamin-B12 independent methionine synthase family. Zn(2+) serves as cofactor.

It catalyses the reaction 5-methyltetrahydropteroyltri-L-glutamate + L-homocysteine = tetrahydropteroyltri-L-glutamate + L-methionine. It participates in amino-acid biosynthesis; L-methionine biosynthesis via de novo pathway; L-methionine from L-homocysteine (MetE route): step 1/1. Its function is as follows. Catalyzes the transfer of a methyl group from 5-methyltetrahydrofolate to homocysteine resulting in methionine formation. The protein is 5-methyltetrahydropteroyltriglutamate--homocysteine methyltransferase of Cytophaga hutchinsonii (strain ATCC 33406 / DSM 1761 / CIP 103989 / NBRC 15051 / NCIMB 9469 / D465).